The following is a 315-amino-acid chain: Ribosomal protein L11 methyltransferase (315 aa).

T162, G183, D205, and N248 together coordinate S-adenosyl-L-methionine.

Belongs to the methyltransferase superfamily. PrmA family.

The protein localises to the cytoplasm. It catalyses the reaction L-lysyl-[protein] + 3 S-adenosyl-L-methionine = N(6),N(6),N(6)-trimethyl-L-lysyl-[protein] + 3 S-adenosyl-L-homocysteine + 3 H(+). Methylates ribosomal protein L11. The sequence is that of Ribosomal protein L11 methyltransferase from Oceanobacillus iheyensis (strain DSM 14371 / CIP 107618 / JCM 11309 / KCTC 3954 / HTE831).